A 492-amino-acid chain; its full sequence is Cytochrome P450 26A1 (492 aa).

Cysteine 438 contacts heme.

This sequence belongs to the cytochrome P450 family. Requires heme as cofactor.

It localises to the endoplasmic reticulum membrane. It is found in the microsome membrane. The enzyme catalyses all-trans-retinoate + reduced [NADPH--hemoprotein reductase] + O2 = all-trans-(4S)-hydroxyretinoate + oxidized [NADPH--hemoprotein reductase] + H2O + H(+). Its function is as follows. A cytochrome P450 monooxygenase involved in the metabolism of all-trans retinoic acid (atRA), a signaling molecule that binds to retinoic acid receptors and regulates gene transcription. Mechanistically, uses molecular oxygen inserting one oxygen atom into a substrate, and reducing the second into a water molecule, with two electrons provided by NADPH via cytochrome P450 reductase (CPR; NADPH-ferrihemoprotein reductase). Catalyzes the hydroxylation of carbon hydrogen bonds of atRA primarily at C-4. Has no activity toward 9-cis and 13-cis retinoic acid stereoisomers. May play a role in the oxidative metabolism of xenobiotics such as tazarotenic acid. The protein is Cytochrome P450 26A1 (cyp26a1) of Danio rerio (Zebrafish).